The following is a 93-amino-acid chain: Small ribosomal subunit protein uS15 (93 aa).

It belongs to the universal ribosomal protein uS15 family. As to quaternary structure, part of the 30S ribosomal subunit. Forms a bridge to the 50S subunit in the 70S ribosome, contacting the 23S rRNA.

Its function is as follows. One of the primary rRNA binding proteins, it binds directly to 16S rRNA where it helps nucleate assembly of the platform of the 30S subunit by binding and bridging several RNA helices of the 16S rRNA. Functionally, forms an intersubunit bridge (bridge B4) with the 23S rRNA of the 50S subunit in the ribosome. In Ehrlichia ruminantium (strain Gardel), this protein is Small ribosomal subunit protein uS15.